A 250-amino-acid polypeptide reads, in one-letter code: MPLTTKPLSLKINAALFDVDGTIIISQPAIAAFWRDFGKDKPYFDAEHVIHISHGWRTYDAIAKFAPDFADEEYVNKLEGEIPEKYGEHSIEVPGAVKLCNALNALPKEKWAVATSGTRDMAKKWFDILKIKRPEYFITANDVKQGKPHPEPYLKGRNGLGFPINEQDPSKSKVVVFEDAPAGIAAGKAAGCKIVGIATTFDLDFLKEKGCDIIVKNHESIRVGEYNAETDEVELIFDDYLYAKDDLLKW.

The Nucleophile role is filled by Asp-18. Residues Asp-18 and Asp-20 each coordinate Mg(2+). Asp-20 acts as the Proton donor in catalysis. Lys-64 participates in a covalent cross-link: Glycyl lysine isopeptide (Lys-Gly) (interchain with G-Cter in SUMO); alternate. A Glycyl lysine isopeptide (Lys-Gly) (interchain with G-Cter in ubiquitin); alternate cross-link involves residue Lys-64. Phosphoserine is present on Ser-90. Residue Lys-144 forms a Glycyl lysine isopeptide (Lys-Gly) (interchain with G-Cter in ubiquitin) linkage. Mg(2+) is bound at residue Asp-179.

Belongs to the HAD-like hydrolase superfamily. DOG/GPP family. Monomer. It depends on Mg(2+) as a cofactor.

The protein localises to the cytoplasm. It is found in the nucleus. It carries out the reaction sn-glycerol 1-phosphate + H2O = glycerol + phosphate. The catalysed reaction is sn-glycerol 3-phosphate + H2O = glycerol + phosphate. In terms of biological role, major isoform of glycerol-1-phosphate phosphohydrolase involved in glycerol biosynthesis. Plays a role in osmoadaptation and required for adaptation to anaerobic conditions. In Saccharomyces cerevisiae (strain ATCC 204508 / S288c) (Baker's yeast), this protein is Glycerol-1-phosphate phosphohydrolase 1.